The chain runs to 240 residues: ATP synthase subunit a (240 aa).

Transmembrane regions (helical) follow at residues 41–61, 92–112, 121–141, 152–172, 191–211, and 212–232; these read WLVMAFLFLVSKFTLGNLEII, FFPMIATFALYIAVANLIGLI, SINTTLALTLIVWATHHVIGF, FIGPMKWLVPLMLPIELISNF, VLLGILFGLAGMFFAPLPIMV, and LGVLVSLVQAMVFVLLTVVYF.

Belongs to the ATPase A chain family. In terms of assembly, F-type ATPases have 2 components, CF(1) - the catalytic core - and CF(0) - the membrane proton channel. CF(1) has five subunits: alpha(3), beta(3), gamma(1), delta(1), epsilon(1). CF(0) has three main subunits: a(1), b(2) and c(9-12). The alpha and beta chains form an alternating ring which encloses part of the gamma chain. CF(1) is attached to CF(0) by a central stalk formed by the gamma and epsilon chains, while a peripheral stalk is formed by the delta and b chains.

It localises to the cell inner membrane. Its function is as follows. Key component of the proton channel; it plays a direct role in the translocation of protons across the membrane. In Desulfotalea psychrophila (strain LSv54 / DSM 12343), this protein is ATP synthase subunit a.